We begin with the raw amino-acid sequence, 493 residues long: Protein LTV1 homolog (493 aa).

Disordered stretches follow at residues 42 to 63 (AAAR…QRQE), 97 to 119 (PNQA…KLML), and 170 to 207 (IQAM…DENE). Positions 176-207 (GDSDDEEWDDEDGEEQSDMDFDSDDLNEDENE) are enriched in acidic residues. 5 positions are modified to phosphoserine: S345, S369, S370, S424, and S427. The interval 359 to 387 (VIDEPRRSRRSSASTNPAPIQIDPKTGLP) is disordered. Residues 437–468 (KDETHEEKKERKRLLKDYRNERRIEKKANTEA) adopt a coiled-coil conformation. The span at 465 to 474 (NTEAFKEEKK) shows a compositional bias: basic and acidic residues. The segment at 465–493 (NTEAFKEEKKRQTHVKINQRTNQQGASIV) is disordered. Residues 479 to 493 (VKINQRTNQQGASIV) are compositionally biased toward polar residues.

The protein belongs to the LTV1 family. Interacts with RpS3; the interaction is RNA-independent. Associates with free 40S ribosome subunits.

It is found in the cytoplasm. Its function is as follows. Necessary for the biogenesis of 40S ribosome subunits by regulating pre-rRNA processing. Non-ribosomal factor required for efficient nuclear export of the ribosomal 40S subunit. Necessary for endoreplication driven by Myc. The sequence is that of Protein LTV1 homolog from Drosophila melanogaster (Fruit fly).